A 309-amino-acid chain; its full sequence is Aurora kinase C (309 aa).

Residues 1–33 (MSSPRAVVQLGKAQPAGEELATANQTAQQPSSP) form a disordered region. Residues 22 to 32 (TANQTAQQPSS) show a composition bias toward polar residues. Residues 43 to 293 (FEIGRPLGKG…LAQILKHPWV (251 aa)) form the Protein kinase domain. Residues 49–57 (LGKGKFGNV) and Lys72 each bind ATP. Asp166 acts as the Proton acceptor in catalysis. A Phosphothreonine; by PKA modification is found at Thr198. An interaction with BIRC5 region spans residues 292–309 (WVQAHSRRVLPPCAQMAS).

It belongs to the protein kinase superfamily. Ser/Thr protein kinase family. Aurora subfamily. In terms of assembly, component of the chromosomal passenger complex (CPC) composed of at least BIRC5/survivin, CDCA8/borealin, INCENP, AURKB or AURKC; predominantly independent AURKB- and AURKC-containing complexes exist; in the complex interacts directly with BIRC5/survivin and INCENP. Interacts with TACC1. Isoform 1 and isoform 2 are expressed in testis. Elevated expression levels were seen only in a subset of cancer cell lines such as Hep-G2, Huh-7 and HeLa. Expression is maximum at M phase.

Its subcellular location is the nucleus. The protein resides in the chromosome. It localises to the centromere. It is found in the cytoplasm. The protein localises to the cytoskeleton. Its subcellular location is the spindle. The enzyme catalyses L-seryl-[protein] + ATP = O-phospho-L-seryl-[protein] + ADP + H(+). The catalysed reaction is L-threonyl-[protein] + ATP = O-phospho-L-threonyl-[protein] + ADP + H(+). With respect to regulation, okadaic acid, an inhibitor of protein phosphatase 1 (PP1), protein phosphatase 2A (PP2A) and protein phosphatase 5 (PP5), increases AURKC activity. AURKC is also stabilized through its interaction with INCENP, which also acts as an activator. Its function is as follows. Serine/threonine-protein kinase component of the chromosomal passenger complex (CPC), a complex that acts as a key regulator of mitosis. The CPC complex has essential functions at the centromere in ensuring correct chromosome alignment and segregation and is required for chromatin-induced microtubule stabilization and spindle assembly. Also plays a role in meiosis and more particularly in spermatogenesis. Has redundant cellular functions with AURKB and can rescue an AURKB knockdown. Like AURKB, AURKC phosphorylates histone H3 at 'Ser-10' and 'Ser-28'. AURKC phosphorylates the CPC complex subunits BIRC5/survivin and INCENP leading to increased AURKC activity. Phosphorylates TACC1, another protein involved in cell division, at 'Ser-228'. The polypeptide is Aurora kinase C (AURKC) (Homo sapiens (Human)).